A 670-amino-acid chain; its full sequence is Beta-fructofuranosidase 1 (670 aa).

The interval 1 to 40 (MIPAVADPTTLDGGGARRPLLPETDPRGRAAAGAEQKRPP) is disordered. Over 1 to 44 (MIPAVADPTTLDGGGARRPLLPETDPRGRAAAGAEQKRPPATPT) the chain is Cytoplasmic. Residues 1–112 (MIPAVADPTT…APLLGSGALQ (112 aa)) constitute a propeptide, removed in mature form. A helical; Signal-anchor for type II membrane protein membrane pass occupies residues 45-65 (VLTAVVSAVLLLVLVAVTVLA). The Lumenal portion of the chain corresponds to 66–670 (SQHVDGQAGG…RPYPATTTSL (605 aa)). Substrate-binding positions include 136–139 (WMND), Gln155, and Trp163. Asp139 is an active-site residue. Asn165 carries N-linked (GlcNAc...) asparagine glycosylation. Residues 198 to 199 (WS) and 263 to 264 (RD) contribute to the substrate site. Asn275 carries N-linked (GlcNAc...) asparagine glycosylation. Substrate contacts are provided by Glu322 and Asp362. Asn518 carries N-linked (GlcNAc...) asparagine glycosylation. An intrachain disulfide couples Cys519 to Cys567. Residues Asn595 and Asn639 are each glycosylated (N-linked (GlcNAc...) asparagine).

This sequence belongs to the glycosyl hydrolase 32 family. In terms of assembly, may be present in two forms, a 70 kDa monomer and a heterodimer of the 30 kDa and 38 kDa subunits. The ratio of the levels of the two forms within cells appears to be regulated developmentally.

It is found in the membrane. It localises to the vacuole lumen. The catalysed reaction is Hydrolysis of terminal non-reducing beta-D-fructofuranoside residues in beta-D-fructofuranosides.. It participates in glycan biosynthesis; sucrose metabolism. The protein is Beta-fructofuranosidase 1 (IVR1) of Zea mays (Maize).